The following is a 185-amino-acid chain: Large ribosomal subunit protein eL19 (185 aa).

Residues 152 to 185 are disordered; it reads SDKLTSQQEARRAKNTASRAKRNEKAQIVAKVDV.

The protein belongs to the eukaryotic ribosomal protein eL19 family.

This chain is Large ribosomal subunit protein eL19 (RPL19), found in Tetrahymena thermophila (strain SB210).